The sequence spans 167 residues: Heme-degrading monooxygenase (167 aa).

Residues 1-50 (MKKVFITTGTEHYLRQLMANYTGGNVTLLQNFSQSLLYQESTGEKLFQEG) are important for catalysis. The ABM domain maps to 67 to 154 (VVVFEYIHLR…NNTQSGFSHE (88 aa)).

Belongs to the antibiotic biosynthesis monooxygenase family. In terms of assembly, monomer.

It is found in the cytoplasm. In terms of biological role, catalyzes the degradation of heme to biliverdin in the presence of a suitable electron donor such as ascorbate, with the subsequent release of iron. Hardly any CO is released by the heme degradation reaction. Binds heme. Allows bacterial pathogens to use the host heme as an iron source. Release of iron from heme may play a crucial role in the pathogenicity of L.monocytogenes. This is Heme-degrading monooxygenase from Listeria monocytogenes serovar 1/2a (strain ATCC BAA-679 / EGD-e).